The sequence spans 825 residues: Trimethylamine-N-oxide reductase (825 aa).

The tat-type signal signal peptide spans 1–40 (MKKNNVNEQRRDFLKKTSLGVAGSALSGGMVGVVSKSAVA). S187 contributes to the Mo-bis(molybdopterin guanine dinucleotide) binding site.

It belongs to the prokaryotic molybdopterin-containing oxidoreductase family. Requires Mo-bis(molybdopterin guanine dinucleotide) as cofactor. In terms of processing, predicted to be exported by the Tat system. The position of the signal peptide cleavage has not been experimentally proven.

It is found in the periplasm. It catalyses the reaction trimethylamine + 2 Fe(III)-[cytochrome c] + H2O = trimethylamine N-oxide + 2 Fe(II)-[cytochrome c] + 3 H(+). In terms of biological role, reduces trimethylamine-N-oxide (TMAO) into trimethylamine; an anaerobic reaction coupled to energy-yielding reactions. This is Trimethylamine-N-oxide reductase (torZ) from Haemophilus influenzae (strain ATCC 51907 / DSM 11121 / KW20 / Rd).